We begin with the raw amino-acid sequence, 408 residues long: Protein ZNF365 (408 aa).

Serine 16 carries the phosphoserine modification. The C2H2-type; degenerate zinc finger occupies 26–51; it reads FRCPRCGDHTRFRSLSSLRAHLEFSH. Phosphoserine is present on residues serine 139 and serine 146. Residues 170–298 are a coiled coil; that stretch reads VEAVDRTIEK…QLEYYQSQQA (129 aa). Threonine 176 carries the post-translational modification Phosphothreonine. Phosphoserine is present on serine 370.

In terms of assembly, homodimer. Interacts with NDE1 and NDEL1. Interacts with DISC1. Interacts with PARP1. Interacts with MCRS1. In terms of tissue distribution, detected in several tissues, with highest levels in brain. Also expressed during embryonic development. Expressed in cerebral cortex, hippocampus, striatum, inferior colliculus and thalamus.

It localises to the cytoplasm. The protein resides in the cytoskeleton. The protein localises to the microtubule organizing center. Its subcellular location is the centrosome. In terms of biological role, contributes to genomic stability by preventing telomere dysfunction. Involved in the morphogenesis of basket cells in the somatosensory cortex during embryogenesis. Involved in the positive regulation of oligodendrocyte differentiation during postnatal growth. Involved in dendritic arborization, morphogenesis of spine density dendrite, and establishment of postsynaptic dendrite density in cortical pyramidal neurons. Involved in the regulation of neurogenesis. Negatively regulates neurite outgrowth. Involved in homologous recombination (HR) repair pathway. Required for proper resolution of DNA double-strand breaks (DSBs) by HR. Is required for recovery of stalled replication forks, and directly contributes to genomic stability. Interacts with PARP1 and mediates MRE11-dependent DNA end resection during replication fork recovery. This chain is Protein ZNF365 (Znf365), found in Mus musculus (Mouse).